The primary structure comprises 346 residues: 3-keto-steroid reductase (346 aa).

Residues Leu20, Thr43, and Lys49 each coordinate NADP(+). Catalysis depends on proton donor residues Ser182 and Tyr205. Positions 205, 209, and 241 each coordinate NADP(+). The Lowers pKa of active site Tyr role is filled by Lys209.

Belongs to the short-chain dehydrogenases/reductases (SDR) family. ERG27 subfamily.

The catalysed reaction is a 3beta-hydroxysteroid + NADP(+) = a 3-oxosteroid + NADPH + H(+). It functions in the pathway steroid biosynthesis; zymosterol biosynthesis; zymosterol from lanosterol: step 5/6. Functionally, responsible for the reduction of the keto group on the C-3 of sterols. The sequence is that of 3-keto-steroid reductase (ERG27) from Debaryomyces hansenii (strain ATCC 36239 / CBS 767 / BCRC 21394 / JCM 1990 / NBRC 0083 / IGC 2968) (Yeast).